Here is a 1173-residue protein sequence, read N- to C-terminus: Ubiquitin conjugation factor E4 B (1173 aa).

M1 carries the post-translational modification N-acetylmethionine. The interval 1–155 is disordered; sequence MEELSADEIR…EPSSGPEVSE (155 aa). A compositionally biased stretch (low complexity) spans 16-33; that stretch reads RLAGGQTSQPTTPLTSPQ. S23 and S31 each carry phosphoserine. Positions 51–64 are enriched in polar residues; it reads QSLGLNVHNMTPAT. Residues 76 to 99 show a composition bias toward low complexity; sequence SQSSEGVSSLSSSPSNSLETQSQS. S84, S88, S90, S101, S103, S105, and S124 each carry phosphoserine. Positions 134–147 are enriched in basic and acidic residues; sequence NDRREKRSLSDKEP. 3 positions are modified to phosphoserine: S238, S674, and S840. Residues 928–948 are disordered; sequence NKEQWDQLPRDQQQARQSQLA. Residues 937-948 show a composition bias toward low complexity; that stretch reads RDQQQARQSQLA. The region spanning 1098–1171 is the U-box domain; it reads DAPDEFRDPL…QAWMREKQSS (74 aa). Phosphoserine is present on S1136.

This sequence belongs to the ubiquitin conjugation factor E4 family. In terms of assembly, interacts with VCP. Interacts with STUB1/CHIP and UNC45B. Post-translationally, proteolytically cleaved by caspases during apoptosis. Cleaved efficiently at Asp-123 by caspase-6 and granzyme B. Cleaved with approximately 10-fold less efficiency at Asp-109 by caspase-3 and caspase-7. Expressed predominantly in neuronal tissues. Also detected in liver, heart, brain, kidney and testis.

It localises to the cytoplasm. The protein localises to the nucleus. It catalyses the reaction S-ubiquitinyl-[E2 ubiquitin-conjugating enzyme]-L-cysteine + [acceptor protein]-L-lysine = [E2 ubiquitin-conjugating enzyme]-L-cysteine + N(6)-ubiquitinyl-[acceptor protein]-L-lysine.. It participates in protein modification; protein ubiquitination. Ubiquitin-protein ligase that probably functions as an E3 ligase in conjunction with specific E1 and E2 ligases. May also function as an E4 ligase mediating the assembly of polyubiquitin chains on substrates ubiquitinated by another E3 ubiquitin ligase. May regulate myosin assembly in striated muscles together with STUB1 and VCP/p97 by targeting myosin chaperone UNC45B for proteasomal degradation. The sequence is that of Ubiquitin conjugation factor E4 B from Mus musculus (Mouse).